The primary structure comprises 126 residues: Glycine cleavage system H protein (126 aa).

The Lipoyl-binding domain maps to Lys22–Glu103. An N6-lipoyllysine modification is found at Lys63.

It belongs to the GcvH family. As to quaternary structure, the glycine cleavage system is composed of four proteins: P, T, L and H. The cofactor is (R)-lipoate.

Functionally, the glycine cleavage system catalyzes the degradation of glycine. The H protein shuttles the methylamine group of glycine from the P protein to the T protein. The protein is Glycine cleavage system H protein of Thermoanaerobacter sp. (strain X514).